The primary structure comprises 113 residues: B-type lectin plumieribetin (113 aa).

The 109-residue stretch at 1-109 (NYLSKNDELR…STEIWNSDKN (109 aa)) folds into the Bulb-type lectin domain.

Homotetramer. Interacts with alpha-1-beta-1 integrin (ITGA1/ITGB1). Post-translationally, not glycosylated. Not N-glycosylated and not O-glycosylated with the mostcommon O-linked glycoconjugates. In terms of processing, the N-terminus is blocked. As to expression, expressed by sting venom glands and is also found in skin mucus. Not found in other tissues tested.

The protein resides in the secreted. Functionally, may contribute to some of the local and systemic effects of envenomation by the scorpionfish. Preferentially recognizes mannose-containing carbohydrate structures, but its interaction with single mannose residues is weak. Potently inhibits alpha-1-beta-1 integrin (ITGA1/ITGB1) binding to basement membrane collagen IV in a divalent cation-independent manner. In addition, moderately inhibits both laminin binding integrins alpha-3-beta-1 (ITGA3/ITGB1) and alpha-7-beta-1 (ITGA7/ITGB1). Weakens the cell-collagen contacts, reduces cell spreading, and alters the actin cytoskeleton, after the compensating alpha-2-beta-1 integrin is blocked. On the cellular level, fails to completely detach hepatocarcinoma HepG2 cells and primary arterial smooth muscle cells from the collagen IV fragment CB3. This Scorpaena plumieri (Spotted scorpionfish) protein is B-type lectin plumieribetin.